A 130-amino-acid polypeptide reads, in one-letter code: Small ribosomal subunit protein uS9 (130 aa).

The protein belongs to the universal ribosomal protein uS9 family.

The protein is Small ribosomal subunit protein uS9 of Streptococcus uberis (strain ATCC BAA-854 / 0140J).